Consider the following 558-residue polypeptide: Formate--tetrahydrofolate ligase (558 aa).

Position 66 to 73 (Thr-66 to Thr-73) interacts with ATP.

This sequence belongs to the formate--tetrahydrofolate ligase family.

It catalyses the reaction (6S)-5,6,7,8-tetrahydrofolate + formate + ATP = (6R)-10-formyltetrahydrofolate + ADP + phosphate. It functions in the pathway one-carbon metabolism; tetrahydrofolate interconversion. The chain is Formate--tetrahydrofolate ligase from Clostridium kluyveri (strain NBRC 12016).